An 821-amino-acid chain; its full sequence is Tip elongation aberrant protein Tea4 (821 aa).

Composition is skewed to polar residues over residues 1 to 11 (MLHMNSASSAD) and 21 to 31 (DPTQQNDSTII). Residues 1-36 (MLHMNSASSADSMEIMESHFDPTQQNDSTIIESRYS) form a disordered region. Y35 is modified (phosphotyrosine). A Phosphoserine modification is found at S36. Position 40 is a phosphotyrosine (Y40). A disordered region spans residues 51–79 (ISGENSEPQTVASQEISDSQEEDTTLTSS). Over residues 53-67 (GENSEPQTVASQEIS) the composition is skewed to polar residues. An SH3 domain is found at 130-191 (IDCNFVHAIR…PAEYIETPSE (62 aa)). Disordered stretches follow at residues 267–292 (LEIE…DHVT), 333–352 (SSTT…FSSA), 473–500 (DSFD…MPNN), 529–570 (SPRL…SSLL), and 664–697 (DASS…SFSS). Positions 268 to 282 (EIEFSDSSDSSLSAE) are enriched in low complexity. Residues 283–292 (YRSESEDHVT) show a composition bias toward basic and acidic residues. 2 stretches are compositionally biased toward polar residues: residues 333-350 (SSTT…SKFS) and 473-484 (DSFDTSNVTQDA). Positions 527-821 (LLSPRLYSSS…EMASLLNTNR (295 aa)) are interaction with tea1. Low complexity predominate over residues 529 to 541 (SPRLYSSSTPSSP). Residues 554–563 (ENRKQADKVE) are compositionally biased toward basic and acidic residues. The tract at residues 599–821 (KAFSQSSIDL…EMASLLNTNR (223 aa)) is interaction with win1. Residues 665–674 (ASSAIPSSSI) are compositionally biased toward low complexity. The segment covering 675 to 687 (SHDEDLLPRKNTE) has biased composition (basic and acidic residues).

An essential component of the tea1 cell-end complex. Interacts with win1, tea1 and for3. Interacts with tip1 in the presence of tea1.

The protein resides in the cytoplasm. It localises to the cytoskeleton. Cell polarity factor essential for the bipolar localization and function of structures containing the cell-end marker tea1 during the normal cell cycle. Regulates cell polarity in complex with tea1 and together with the stress signaling MAPK cascade, contributes to cell polarity maintenance under stress conditions. Required for the localization of for3 at the cell tip specifically during initiation of bipolar growth. During the new end take off (NETO), formation of a protein complex that includes tea1, tea4 and for3 is necessary and sufficient for the establishment of cell polarity and localized actin assembly at new cell ends. This chain is Tip elongation aberrant protein Tea4, found in Schizosaccharomyces pombe (strain 972 / ATCC 24843) (Fission yeast).